The sequence spans 287 residues: Nucleoside kinase (287 aa).

Asp-13, Asn-28, Gly-38, and Asn-42 together coordinate substrate. Gln-102 serves as a coordination point for ATP. Substrate is bound by residues Ser-104 and Gln-150. ATP-binding positions include Asn-173 and 196 to 201 (TNGERG). Asp-227 contributes to the substrate binding site. The active-site Proton acceptor is the Asp-227.

Belongs to the carbohydrate kinase PfkB family. As to quaternary structure, homodimer. Mg(2+) serves as cofactor. It depends on Co(2+) as a cofactor.

The enzyme catalyses adenosine + ATP = AMP + ADP + H(+). It catalyses the reaction cytidine + ATP = CMP + ADP + H(+). It carries out the reaction guanosine + ATP = GMP + ADP + H(+). The catalysed reaction is inosine + ATP = IMP + ADP + H(+). Its function is as follows. Nucleoside kinase with broad substrate specificity. Catalyzes the phosphorylation of a variety of nucleosides to the corresponding nucleoside 5'-mono-phosphate in the presence of phosphate donors and divalent cations. Displays the most efficient activity with guanosine, followed by inosine, cytidine, and adenosine. Negligible enzymatic activity is detected with thymidine, uridine, and 2-deoxyadenosine. ATP is the most efficient phosphate donor, but can also use GTP and ITP. Shows no sugar kinase activity, since it is unable to phosphorylate ribose, fructose-1-phosphate, or fructose-6-phosphate. This chain is Nucleoside kinase, found in Thermoplasma acidophilum (strain ATCC 25905 / DSM 1728 / JCM 9062 / NBRC 15155 / AMRC-C165).